The primary structure comprises 955 residues: Glycine dehydrogenase (decarboxylating) (955 aa).

Lysine 705 carries the post-translational modification N6-(pyridoxal phosphate)lysine.

This sequence belongs to the GcvP family. The glycine cleavage system is composed of four proteins: P, T, L and H. Pyridoxal 5'-phosphate is required as a cofactor.

The enzyme catalyses N(6)-[(R)-lipoyl]-L-lysyl-[glycine-cleavage complex H protein] + glycine + H(+) = N(6)-[(R)-S(8)-aminomethyldihydrolipoyl]-L-lysyl-[glycine-cleavage complex H protein] + CO2. Functionally, the glycine cleavage system catalyzes the degradation of glycine. The P protein binds the alpha-amino group of glycine through its pyridoxal phosphate cofactor; CO(2) is released and the remaining methylamine moiety is then transferred to the lipoamide cofactor of the H protein. The protein is Glycine dehydrogenase (decarboxylating) of Aliivibrio fischeri (strain ATCC 700601 / ES114) (Vibrio fischeri).